Here is a 465-residue protein sequence, read N- to C-terminus: UDP-N-acetylmuramate--L-alanine ligase (465 aa).

Residue 112–118 (GTHGKTT) participates in ATP binding.

The protein belongs to the MurCDEF family.

The protein resides in the cytoplasm. It carries out the reaction UDP-N-acetyl-alpha-D-muramate + L-alanine + ATP = UDP-N-acetyl-alpha-D-muramoyl-L-alanine + ADP + phosphate + H(+). Its pathway is cell wall biogenesis; peptidoglycan biosynthesis. Its function is as follows. Cell wall formation. This chain is UDP-N-acetylmuramate--L-alanine ligase, found in Burkholderia pseudomallei (strain 1106a).